A 1257-amino-acid polypeptide reads, in one-letter code: Neurocan core protein (1257 aa).

A signal peptide spans 1–22; it reads MGAESVWASGLLVLWLLLLVSG. The 121-residue stretch at 37 to 157 folds into the Ig-like V-type domain; the sequence is HMLKSGSGPI…EQDLVTLEVT (121 aa). Disulfide bonds link Cys-58–Cys-139, Cys-181–Cys-252, Cys-205–Cys-226, Cys-279–Cys-354, and Cys-303–Cys-324. An N-linked (GlcNAc...) asparagine glycan is attached at Asn-121. 2 consecutive Link domains span residues 159 to 254 and 258 to 356; these read VVFH…YCFA and GGEV…YCFR. Asn-339 carries N-linked (GlcNAc...) asparagine glycosylation. The interval 361–391 is disordered; it reads TPQRGDSEIPSSGDEGEIVSAEGPPAPELKP. Residues Ser-380 and Ser-410 are each glycosylated (O-linked (Xyl...) (chondroitin sulfate) serine). A compositionally biased stretch (low complexity) spans 447-459; the sequence is SSTGVPSPSSLGV. Disordered regions lie at residues 447 to 493, 550 to 610, and 683 to 707; these read SSTG…FQQQ, GSLG…AVPS, and GAEDPETPFQTTMAAPGEASHGSPE. Residues 464-473 are compositionally biased toward polar residues; that stretch reads TTPSGTQVAP. Residues 569–580 show a composition bias toward low complexity; the sequence is SPSTVPSTDSTP. N-linked (GlcNAc...) asparagine glycosylation occurs at Asn-737. A glycan (O-linked (Xyl...) (chondroitin sulfate) serine) is linked at Ser-944. An EGF-like 1 domain is found at 949-985; sequence PTDPCENNPCLHGGTCRTNGTMYGCSCDQGYAGENCE. Cystine bridges form between Cys-953-Cys-964, Cys-958-Cys-973, Cys-975-Cys-984, Cys-991-Cys-1002, Cys-996-Cys-1011, Cys-1013-Cys-1022, Cys-1029-Cys-1040, Cys-1057-Cys-1149, Cys-1125-Cys-1141, Cys-1156-Cys-1199, and Cys-1185-Cys-1212. Asn-967 is a glycosylation site (N-linked (GlcNAc...) asparagine). The EGF-like 2; calcium-binding domain maps to 987–1023; it reads DIDDCLCSPCENGGTCIDEVNGFICLCLPSYGGNLCE. The C-type lectin domain occupies 1025-1154; sequence DTEGCDRGWH…LPYVCKKGTV (130 aa). The region spanning 1154–1214 is the Sushi domain; sequence VLCGPPPAVE…WDRPQIVCTK (61 aa). An N-linked (GlcNAc...) asparagine glycan is attached at Asn-1164. A compositionally biased stretch (basic residues) spans 1215–1244; the sequence is PRRSHRMRRHHHHPHRHHKPRKEHRKHKRH. The interval 1215 to 1257 is disordered; the sequence is PRRSHRMRRHHHHPHRHHKPRKEHRKHKRHPAEDWEKDEGDFC.

It belongs to the aggrecan/versican proteoglycan family. In terms of processing, two isoforms were found that probably arise by proteolytic processing. The large isoform is predominant in early postnatal brain, the small isoform is found in adult brain. Post-translationally, O-glycosylated; contains chondroitin sulfate. In terms of tissue distribution, early postnatal and adult brain; not expressed in kidney, lung, liver and muscle.

Its subcellular location is the secreted. Functionally, may modulate neuronal adhesion and neurite growth during development by binding to neural cell adhesion molecules (NG-CAM and N-CAM). Chondroitin sulfate proteoglycan; binds to hyaluronic acid. The chain is Neurocan core protein (Ncan) from Rattus norvegicus (Rat).